The chain runs to 280 residues: Cell envelope integrity protein EipB (280 aa).

A signal peptide spans 1–24 (MRFVRIAAAASGATVFMWAGFAGA). The cysteines at positions 69 and 278 are disulfide-linked.

As to quaternary structure, monomer.

It is found in the periplasm. Functionally, functions in the periplasm to maintain cell envelope integrity. This chain is Cell envelope integrity protein EipB, found in Brucella abortus (strain 2308).